Reading from the N-terminus, the 225-residue chain is 2-C-methyl-D-erythritol 4-phosphate cytidylyltransferase (225 aa).

The protein belongs to the IspD/TarI cytidylyltransferase family. IspD subfamily.

It carries out the reaction 2-C-methyl-D-erythritol 4-phosphate + CTP + H(+) = 4-CDP-2-C-methyl-D-erythritol + diphosphate. It participates in isoprenoid biosynthesis; isopentenyl diphosphate biosynthesis via DXP pathway; isopentenyl diphosphate from 1-deoxy-D-xylulose 5-phosphate: step 2/6. In terms of biological role, catalyzes the formation of 4-diphosphocytidyl-2-C-methyl-D-erythritol from CTP and 2-C-methyl-D-erythritol 4-phosphate (MEP). The chain is 2-C-methyl-D-erythritol 4-phosphate cytidylyltransferase from Haemophilus influenzae (strain PittGG).